We begin with the raw amino-acid sequence, 98 residues long: Small ribosomal subunit protein bS20 (98 aa).

It belongs to the bacterial ribosomal protein bS20 family.

Binds directly to 16S ribosomal RNA. In Synechococcus elongatus (strain ATCC 33912 / PCC 7942 / FACHB-805) (Anacystis nidulans R2), this protein is Small ribosomal subunit protein bS20.